The primary structure comprises 207 residues: Probable GTP-binding protein EngB (207 aa).

In terms of domain architecture, EngB-type G spans 22-194; sequence DLPEIAFAGR…WRRIEEVLPA (173 aa). GTP contacts are provided by residues 30–37, 57–61, 75–78, 142–145, and 173–175; these read GRSNVGKS, GRTQL, DLPG, TKCD, and FSA. Mg(2+)-binding residues include Ser-37 and Thr-59.

It belongs to the TRAFAC class TrmE-Era-EngA-EngB-Septin-like GTPase superfamily. EngB GTPase family. It depends on Mg(2+) as a cofactor.

In terms of biological role, necessary for normal cell division and for the maintenance of normal septation. This chain is Probable GTP-binding protein EngB, found in Geotalea daltonii (strain DSM 22248 / JCM 15807 / FRC-32) (Geobacter daltonii).